We begin with the raw amino-acid sequence, 878 residues long: Valine--tRNA ligase (878 aa).

Residues 43–53 (PYPTGRLHLGH) carry the 'HIGH' region motif. Residues 527–531 (KMSKS) carry the 'KMSKS' region motif. ATP is bound at residue Lys-530.

This sequence belongs to the class-I aminoacyl-tRNA synthetase family. ValS type 2 subfamily.

The protein localises to the cytoplasm. It catalyses the reaction tRNA(Val) + L-valine + ATP = L-valyl-tRNA(Val) + AMP + diphosphate. Functionally, catalyzes the attachment of valine to tRNA(Val). As ValRS can inadvertently accommodate and process structurally similar amino acids such as threonine, to avoid such errors, it has a 'posttransfer' editing activity that hydrolyzes mischarged Thr-tRNA(Val) in a tRNA-dependent manner. This Methanocaldococcus jannaschii (strain ATCC 43067 / DSM 2661 / JAL-1 / JCM 10045 / NBRC 100440) (Methanococcus jannaschii) protein is Valine--tRNA ligase.